Here is a 176-residue protein sequence, read N- to C-terminus: Cystatin-related protein 1 (176 aa).

The first 26 residues, 1–26 (MCKTLHGTLLLLAIFVLFLNFSHATA), serve as a signal peptide directing secretion. Residues 27–31 (KRTRR) constitute a propeptide that is removed on maturation. An N-linked (GlcNAc...) asparagine glycan is attached at Asn-71. Disulfide bonds link Cys-129/Cys-139 and Cys-153/Cys-173.

Belongs to the cystatin family. As to expression, prostate and lacrimal gland.

The chain is Cystatin-related protein 1 (Andpro) from Rattus norvegicus (Rat).